The chain runs to 640 residues: Threonine--tRNA ligase (640 aa).

Residues 1 to 61 (MPAITLPDGS…DADARLRFIT (61 aa)) enclose the TGS domain. The segment at 243-536 (DHRKIGRQMD…LIENCAGRFP (294 aa)) is catalytic. Zn(2+)-binding residues include Cys-336, His-387, and His-513.

Belongs to the class-II aminoacyl-tRNA synthetase family. Homodimer. Zn(2+) serves as cofactor.

The protein localises to the cytoplasm. It catalyses the reaction tRNA(Thr) + L-threonine + ATP = L-threonyl-tRNA(Thr) + AMP + diphosphate + H(+). In terms of biological role, catalyzes the attachment of threonine to tRNA(Thr) in a two-step reaction: L-threonine is first activated by ATP to form Thr-AMP and then transferred to the acceptor end of tRNA(Thr). Also edits incorrectly charged L-seryl-tRNA(Thr). The sequence is that of Threonine--tRNA ligase from Acidiphilium cryptum (strain JF-5).